The chain runs to 437 residues: GTPase Der (437 aa).

EngA-type G domains follow at residues 3–168 (PLIA…PESE) and 178–353 (VKLA…RNRS). Residues 9–16 (GRPNVGKS), 56–60 (DTGGY), 120–123 (NKVE), 184–191 (GRPNVGKS), 231–235 (DTAGL), and 296–299 (NKWD) each bind GTP. One can recognise a KH-like domain in the interval 354–437 (RKISTSSLNR…VPISLRFMEK (84 aa)).

Belongs to the TRAFAC class TrmE-Era-EngA-EngB-Septin-like GTPase superfamily. EngA (Der) GTPase family. In terms of assembly, associates with the 50S ribosomal subunit.

GTPase that plays an essential role in the late steps of ribosome biogenesis. The chain is GTPase Der from Chlorobium limicola (strain DSM 245 / NBRC 103803 / 6330).